A 196-amino-acid chain; its full sequence is Interferon lambda-3 (196 aa).

The N-terminal stretch at 1-21 (MTGDCMPVLVLMAAVLTVTGA) is a signal peptide. 3 cysteine pairs are disulfide-bonded: cysteine 37–cysteine 136, cysteine 71–cysteine 169, and cysteine 188–cysteine 195.

The protein belongs to the lambda interferon family.

The protein localises to the secreted. Functionally, cytokine with antiviral, antitumour and immunomodulatory activities. Plays a critical role in the antiviral host defense, predominantly in the epithelial tissues. Acts as a ligand for the heterodimeric class II cytokine receptor composed of IL10RB and IFNLR1, and receptor engagement leads to the activation of the JAK/STAT signaling pathway resulting in the expression of IFN-stimulated genes (ISG), which mediate the antiviral state. Has a restricted receptor distribution and therefore restricted targets: is primarily active in epithelial cells and this cell type-selective action is because of the epithelial cell-specific expression of its receptor IFNLR1. Seems not to be essential for early virus-activated host defense in vaginal infection, but plays an important role in Toll-like receptor (TLR)-induced antiviral defense. Plays a significant role in the antiviral immune defense in the intestinal epithelium. Exerts an immunomodulatory effect by up-regulating MHC class I antigen expression. The chain is Interferon lambda-3 (IFNL3) from Homo sapiens (Human).